The chain runs to 199 residues: MAKVLVLYYSSYGHIEKMAEAVAAGARDAGAEVTIKRVPELVPEEVARKSGMKLDQPAPVATVGELPDYDAIIFGTPTRFGNMASQMRNFLDQTGGLWMSGKLVGKVGSVFASTATQHGGQETTITSFHTTLLHHGMVIVGLPYTEARQMNMDEITGGSPYGATTLAKGDGTRQPSENELAMARFQGGHVAKIAAKLAG.

Residues Val4–Val190 enclose the Flavodoxin-like domain. Residues Ser10–Ile15 and Thr78–Phe80 contribute to the FMN site. Position 12 (Tyr12) interacts with NAD(+). Residue Trp98 coordinates substrate. Residues Ser113–Gly119 and His134 contribute to the FMN site.

The protein belongs to the WrbA family. It depends on FMN as a cofactor.

It carries out the reaction a quinone + NADH + H(+) = a quinol + NAD(+). It catalyses the reaction a quinone + NADPH + H(+) = a quinol + NADP(+). This Azoarcus sp. (strain BH72) protein is NAD(P)H dehydrogenase (quinone).